The following is a 428-amino-acid chain: Spliceosome RNA helicase DDX39B (428 aa).

The span at M1 to E19 shows a compositional bias: acidic residues. The segment at M1–K32 is disordered. An N-acetylalanine modification is found at A2. K36 carries the post-translational modification N6-acetyllysine; alternate. K36 participates in a covalent cross-link: Glycyl lysine isopeptide (Lys-Gly) (interchain with G-Cter in SUMO2); alternate. A phosphoserine mark is found at S38 and S41. A Q motif motif is present at residues S45–H73. One can recognise a Helicase ATP-binding domain in the interval I76 to I249. A89–T96 lines the ATP pocket. Position 172 is a phosphothreonine (T172). Positions D196–D199 match the DECD box motif. In terms of domain architecture, Helicase C-terminal spans G261–S422.

It belongs to the DEAD box helicase family. DECD subfamily. In terms of assembly, homodimer, and heterodimer with DDX39A. DDX39B interacts with the THO subcomplex to form the THO-DDX39B complex which multimerizes into a 28-subunit tetrameric assembly. Component of the transcription/export (TREX) complex at least composed of ALYREF/THOC4, DDX39B, SARNP/CIP29, CHTOP and the THO subcomplex; in the complex interacts with THOC2. THOC1-THOC2-THOC3-DDX39B subcomplex is sufficient for the interaction with export factor NXF1-NXT1. TREX seems to have a dynamic structure involving ATP-dependent remodeling. Within the TREX complex bridges ALYREF/THOC4 and the THO subcomplex, and, in a ATP-dependent manner, ALYREF/THOC4 and SARNP/CIP29. Component of the spliceosome. Interacts directly with U2AF2. Interacts with RBM8A, RNPS1 and SRRM1, FYTTD1/UIF, THOC1, MX1 and POLDIP3. Interacts with LUZP4. Interacts with SARNP/CIP29 (via the C-terminal domain); the interaction is direct and facilitates RNA binding of DDX39B.

It localises to the nucleus. Its subcellular location is the nucleus speckle. The protein resides in the cytoplasm. The catalysed reaction is ATP + H2O = ADP + phosphate + H(+). Functionally, involved in nuclear export of spliced and unspliced mRNA. Component of the TREX complex which is thought to couple mRNA transcription, processing and nuclear export, and specifically associates with spliced mRNA and not with unspliced pre-mRNA. The TREX complex is recruited to spliced mRNAs by a transcription-independent mechanism, binds to mRNA upstream of the exon-junction complex (EJC) and is recruited in a splicing- and cap-dependent manner to a region near the 5' end of the mRNA where it functions in mRNA export to the cytoplasm via the TAP/NXF1 pathway. The THOC1-THOC2-THOC3 core complex alone is sufficient to promote ATPase activity of DDX39B; in the complex THOC2 is the only component that directly interacts with DDX39B. Associates with SARNP/CIP29, which facilitates RNA binding of DDX39B and likely plays a role in mRNA export. May undergo several rounds of ATP hydrolysis during assembly of TREX to drive subsequent loading of components such as ALYREF/THOC4 and CHTOP onto mRNA. Also associates with pre-mRNA independent of ALYREF/THOC4. Involved in the nuclear export of intronless mRNA; the ATP-bound form is proposed to recruit export adapter ALYREF/THOC4 to intronless mRNA; its ATPase activity is cooperatively stimulated by RNA and ALYREF/THOC4 and ATP hydrolysis is thought to trigger the dissociation from RNA to allow the association of ALYREF/THOC4 and the NXF1-NXT1 heterodimer. Involved in transcription elongation and genome stability. Splice factor that is required for the first ATP-dependent step in spliceosome assembly and for the interaction of U2 snRNP with the branchpoint. Has both RNA-stimulated ATP binding/hydrolysis activity and ATP-dependent RNA unwinding activity. Even with the stimulation of RNA, the ATPase activity is weak. Can only hydrolyze ATP but not other NTPs. The RNA stimulation of ATPase activity does not have a strong preference for the sequence and length of the RNA. However, ssRNA stimulates the ATPase activity much more strongly than dsRNA. Can unwind 5' or 3' overhangs or blunt end RNA duplexes in vitro. The ATPase and helicase activities are not influenced by U2AF2; the effect of ALYREF/THOC4 is reported conflictingly. The protein is Spliceosome RNA helicase DDX39B (DDX39B) of Canis lupus familiaris (Dog).